Here is a 552-residue protein sequence, read N- to C-terminus: Hyaluronan synthase 2 (552 aa).

Residues 1–11 (MHCERFLCILR) lie on the Cytoplasmic side of the membrane. A helical transmembrane segment spans residues 12 to 32 (IIGTTLFGVSLLLGITAAYIV). Over 33–45 (GYQFIQTDNYYFS) the chain is Extracellular. Residues 46-66 (FGLYGAFLASHLIIQSLFAFL) traverse the membrane as a helical segment. The Cytoplasmic segment spans residues 67 to 374 (EHRKMKKSLE…NAMWFHKHHL (308 aa)). Phosphothreonine is present on Thr110. Lys190 participates in a covalent cross-link: Glycyl lysine isopeptide (Lys-Gly) (interchain with G-Cter in ubiquitin). Ser221 is a glycosylation site (O-linked (GlcNAc) serine). A Phosphothreonine modification is found at Thr328. Residues 375-395 (WMTYEAIITGFFPFFLIATVI) traverse the membrane as a helical segment. Topologically, residues 396 to 402 (QLFYRGK) are extracellular. A helical membrane pass occupies residues 403-423 (IWNILLFLLTVQLVGLIKSSF). Residues 424–429 (ASCLRG) are Cytoplasmic-facing. A helical membrane pass occupies residues 430–450 (NIVMVFMSLYSVLYMSSLLPA). Residues 451-475 (KMFAIATINKAGWGTSGRKTIVVNF) lie on the Extracellular side of the membrane. The chain crosses the membrane as a helical span at residues 476–496 (IGLIPVSVWFTILLGGVIFTI). Over 497–510 (YKESKRPFSESKQT) the chain is Cytoplasmic. Residues 511–531 (VLIVGTLLYACYWVMLLTLYV) traverse the membrane as a helical segment. The Extracellular portion of the chain corresponds to 532–552 (VLINKCGRRKKGQQYDMVLDV).

This sequence belongs to the NodC/HAS family. As to quaternary structure, homodimer; dimerization promotes enzymatic activity. Forms heterodimer with HAS3. Forms heterodimer with HAS1. Mg(2+) serves as cofactor. In terms of processing, phosphorylation at Thr-328 is essential for hyaluronan synthase activity. Phosphorylation at Thr-110 is required for transport from ER to Golgi. O-GlcNAcylation at Ser-221 increases the stability of HAS2 and plasma membrane localization. Post-translationally, ubiquitination at Lys-190; this ubiquitination is essential for hyaluronan synthase activity and homo- or hetero-oligomerization. Can also be poly-ubiquitinated. Deubiquitinated by USP17 and USP4. USP17 efficiently removes 'Lys-63'- and 'Lys-48'-linked polyubiquitin chains, whereas USP4 preferentially removes monoubiquitination and, partially, both 'Lys-63'- and 'Lys-48'-linked polyubiquitin chain. Expressed in fibroblasts.

It is found in the cell membrane. It localises to the endoplasmic reticulum membrane. The protein localises to the vesicle. Its subcellular location is the golgi apparatus membrane. The protein resides in the lysosome. It catalyses the reaction [hyaluronan](n) + UDP-N-acetyl-alpha-D-glucosamine = N-acetyl-beta-D-glucosaminyl-(1-&gt;4)-[hyaluronan](n) + UDP + H(+). The enzyme catalyses N-acetyl-beta-D-glucosaminyl-(1-&gt;4)-[hyaluronan](n) + UDP-alpha-D-glucuronate = [hyaluronan](n+1) + UDP + H(+). It participates in glycan biosynthesis; hyaluronan biosynthesis. Regulated by several post-translational modifications such as ubiquitination/deubiquitination, phosphorylation and O-GlcNAcylation. The enzymatic activity depends on the availability of UDP-GlcUA and UDP-GlcNAc. Catalyzes the addition of GlcNAc or GlcUA monosaccharides to the nascent hyaluronan polymer. Therefore, it is essential to hyaluronan synthesis a major component of most extracellular matrices that has a structural role in tissues architectures and regulates cell adhesion, migration and differentiation. This is one of three isoenzymes responsible for cellular hyaluronan synthesis and it is particularly responsible for the synthesis of high molecular mass hyaluronan. The sequence is that of Hyaluronan synthase 2 from Homo sapiens (Human).